We begin with the raw amino-acid sequence, 275 residues long: Putative pyruvate, phosphate dikinase regulatory protein (275 aa).

149 to 156 (GVSRTSKT) contributes to the ADP binding site.

It belongs to the pyruvate, phosphate/water dikinase regulatory protein family. PDRP subfamily.

It carries out the reaction N(tele)-phospho-L-histidyl/L-threonyl-[pyruvate, phosphate dikinase] + ADP = N(tele)-phospho-L-histidyl/O-phospho-L-threonyl-[pyruvate, phosphate dikinase] + AMP + H(+). It catalyses the reaction N(tele)-phospho-L-histidyl/O-phospho-L-threonyl-[pyruvate, phosphate dikinase] + phosphate + H(+) = N(tele)-phospho-L-histidyl/L-threonyl-[pyruvate, phosphate dikinase] + diphosphate. In terms of biological role, bifunctional serine/threonine kinase and phosphorylase involved in the regulation of the pyruvate, phosphate dikinase (PPDK) by catalyzing its phosphorylation/dephosphorylation. The sequence is that of Putative pyruvate, phosphate dikinase regulatory protein from Levilactobacillus brevis (strain ATCC 367 / BCRC 12310 / CIP 105137 / JCM 1170 / LMG 11437 / NCIMB 947 / NCTC 947) (Lactobacillus brevis).